The following is a 475-amino-acid chain: Glycogen synthase (475 aa).

Lys-15 is a binding site for ADP-alpha-D-glucose.

The protein belongs to the glycosyltransferase 1 family. Bacterial/plant glycogen synthase subfamily.

It carries out the reaction [(1-&gt;4)-alpha-D-glucosyl](n) + ADP-alpha-D-glucose = [(1-&gt;4)-alpha-D-glucosyl](n+1) + ADP + H(+). Its pathway is glycan biosynthesis; glycogen biosynthesis. Its function is as follows. Synthesizes alpha-1,4-glucan chains using ADP-glucose. This is Glycogen synthase from Anaeromyxobacter dehalogenans (strain 2CP-C).